A 397-amino-acid polypeptide reads, in one-letter code: Acetate kinase 1 (397 aa).

Position 8 (Asn8) interacts with Mg(2+). Residue Lys15 participates in ATP binding. Arg89 lines the substrate pocket. The active-site Proton donor/acceptor is the Asp146. Residues 206–210 (HLGNG), 281–283 (DLR), and 329–333 (GIGEN) contribute to the ATP site. Residue Glu382 coordinates Mg(2+).

Belongs to the acetokinase family. Homodimer. Mg(2+) is required as a cofactor. It depends on Mn(2+) as a cofactor.

Its subcellular location is the cytoplasm. The enzyme catalyses acetate + ATP = acetyl phosphate + ADP. It participates in metabolic intermediate biosynthesis; acetyl-CoA biosynthesis; acetyl-CoA from acetate: step 1/2. Its function is as follows. Catalyzes the formation of acetyl phosphate from acetate and ATP. Can also catalyze the reverse reaction. The polypeptide is Acetate kinase 1 (Listeria monocytogenes serovar 1/2a (strain ATCC BAA-679 / EGD-e)).